The chain runs to 2362 residues: Filaggrin-2 (2362 aa).

An S-100-like region spans residues 1 to 81 (MAYLLRSVVT…TEFILMIFKL (81 aa)). EF-hand domains lie at 8–43 (VVTI…EFRP) and 49–84 (DDPD…LALA). Asp-62, Asp-64, Asp-66, Arg-68, and Glu-73 together coordinate Ca(2+). Disordered regions lie at residues 96–238 (ASGS…GLSC) and 284–2109 (GCCR…SSIP). A compositionally biased stretch (acidic residues) spans 111–120 (EESETEEEEE). 2 stretches are compositionally biased toward basic and acidic residues: residues 159–174 (KRLE…EESR) and 189–214 (NKEK…PSRE). Filaggrin repeat units follow at residues 261 to 308 (GYNT…NQSC) and 373 to 414 (HSSC…SNGF). Composition is skewed to polar residues over residues 284–317 (GCCR…CQSG), 342–375 (SCSQ…SHSS), and 383–395 (GATQ…QQRM). The span at 396–411 (SSCGHSSSSHQKGCSS) shows a compositional bias: low complexity. 2 stretches are compositionally biased toward polar residues: residues 421-443 (ASGS…SSGF) and 450-469 (SGQS…SGYS). Composition is skewed to low complexity over residues 474-519 (GSGQ…QSSG), 539-550 (GSRQSSGSEQHG), and 567-580 (SQSS…SGSQ). Residues 555-607 (QSSGSGKHETGPSQSSSSGHHGSGSQQHGGGSGQSTGFGEHESSSGHSSSSGQ) form a Filaggrin 3 repeat. Gly residues predominate over residues 581–590 (QHGGGSGQST). Low complexity predominate over residues 599–618 (SGHSSSSGQHRSGSRHSSGS). Residues 632 to 653 (GHHGSGSQQHGGGSGNSTGFGE) show a composition bias toward gly residues. Over residues 654-675 (HGSSSHPLPSSGQNESSSGQSS) the composition is skewed to low complexity. The stretch at 672–723 (GQSSRSERHGTGSGQSSGFGQHGSGSHQSSSSGHNEYGSGQTSSSWPHGKGS) is one Filaggrin 4 repeat. Residues 682 to 694 (TGSGQSSGFGQHG) show a composition bias toward gly residues. 3 stretches are compositionally biased toward low complexity: residues 695–705 (SGSHQSSSSGH), 728–754 (GYGE…QSSS), and 780–798 (GYGE…WQHG). The span at 826–838 (TGSGQSLGFGQHG) shows a compositional bias: gly residues. Positions 846-864 (SSGHYESVSEPSSSSWQHG) are enriched in low complexity. Residues 880–927 (HGQSSSAWNHGNESGQSNGYGEHESGHGQSSSAWNHGNESGQSNGFGE) form a Filaggrin 5 repeat. Polar residues-rich tracts occupy residues 886–896 (AWNHGNESGQS) and 912–925 (AWNH…SNGF). The span at 973 to 982 (ESSEGEEHSV) shows a compositional bias: basic and acidic residues. The stretch at 984 to 1035 (PRRYSGYGHGQGQAGHQQRESGYGQRGRPQGPSQDSSRQPQAGHGQPSQSGY) is one Filaggrin 6 repeat. Residues 1014 to 1035 (GPSQDSSRQPQAGHGQPSQSGY) show a composition bias toward polar residues. Over residues 1047–1059 (EYSEGEAHSEVSQ) the composition is skewed to basic and acidic residues. Residues 1067 to 1077 (CHCHCHGQARH) are compositionally biased toward basic residues. Residues 1104–1121 (GPGQPSQSGSRRSPRSQP) are compositionally biased toward low complexity. The segment covering 1142–1152 (SGHGHGQGQGQ) has biased composition (gly residues). The segment covering 1162–1174 (HGQQGRPQGPSQD) has biased composition (polar residues). A Filaggrin 7 repeat occupies 1165–1210 (QGRPQGPSQDSSRQPQAGQGQPSQSGSGRSPRRSPVHPESSEGEEH). Positions 1175–1193 (SSRQPQAGQGQPSQSGSGR) are enriched in low complexity. A phosphoserine mark is found at Ser-1198, Ser-1204, and Ser-1205. The segment covering 1220–1232 (SGHGHGQGQGQGQ) has biased composition (gly residues). Residues 1255-1273 (SSRQPQAGQGQPSQSGSGR) show a composition bias toward low complexity. A phosphoserine mark is found at Ser-1278, Ser-1284, and Ser-1285. A Filaggrin 8 repeat occupies 1280–1334 (VHPESSEGEEHSVVPQRHSGSGHGHGQGQGQAGHQQRESVHGQPVRPEVPTQDSS). Gly residues predominate over residues 1300-1310 (SGHGHGQGQGQ). Positions 1333–1351 (SSRQPQAGQGQPSQSGSGR) are enriched in low complexity. A phosphoserine mark is found at Ser-1356, Ser-1362, and Ser-1363. Basic and acidic residues predominate over residues 1377–1396 (ESCHCHCHDQAGHQQRESVH). Over residues 1413-1436 (PQAGPGQPSQSGSRRSPRSSPVHP) the composition is skewed to low complexity. 2 positions are modified to phosphoserine: Ser-1438 and Ser-1439. The span at 1454–1464 (SGHGHGQGQGQ) shows a compositional bias: gly residues. The Filaggrin 9 repeat unit spans residues 1474 to 1522 (HGQRGRPQGPTQDSSRQPQAGQGQPSQSGSGRSPRRSPVHPESSEGEEH). Residues 1487–1505 (SSRQPQAGQGQPSQSGSGR) show a composition bias toward low complexity. Ser-1510, Ser-1516, and Ser-1517 each carry phosphoserine. Positions 1532-1544 (SGHGHGHGQGQGQ) are enriched in gly residues. Positions 1567–1585 (SSRQPQAGQGQPSQSGSGR) are enriched in low complexity. Phosphoserine occurs at positions 1590, 1596, and 1597. Composition is skewed to low complexity over residues 1643-1661 (SSRQ…GSGR) and 1683-1696 (QRHS…GQGQ). Over residues 1698–1708 (HAEHQQRESVH) the composition is skewed to basic and acidic residues. The Filaggrin 10 repeat unit spans residues 1723–1756 (RQPQAGQGQPSLSGSGRSPRRSPVHPESSEGEEH). Positions 1724 to 1739 (QPQAGQGQPSLSGSGR) are enriched in low complexity. A phosphoserine mark is found at Ser-1744, Ser-1750, Ser-1751, Ser-1824, Ser-1830, and Ser-1831. The segment covering 1801-1825 (SSRQPQAGQGQPSQSGSGRSPGRSP) has biased composition (low complexity). The span at 1829–1848 (ESSEGEEHSVVPQRHSESGH) shows a compositional bias: basic and acidic residues. Low complexity predominate over residues 1879 to 1897 (SSRQPQAGQGQPSQSGSGR). 3 positions are modified to phosphoserine: Ser-1902, Ser-1908, and Ser-1909. Over residues 1924 to 1934 (SGHGHGQGQGQ) the composition is skewed to gly residues. Residues 1949–1975 (RPQGPSQDSSSQPQASQGQPSQSGSGR) show a composition bias toward low complexity. Phosphoserine is present on residues Ser-1980, Ser-1986, and Ser-1987. The segment covering 2002–2012 (SGHGHGQGQGQ) has biased composition (gly residues). One copy of the Filaggrin 11 repeat lies at 2016-2070 (QQRESLHGQRGRSQSPFHPSHSIHWQSKCTISKKSSRLSGHYGRNHFQSTISGNQ). 3 stretches are compositionally biased toward polar residues: residues 2026 to 2048 (GRSQ…TISK), 2061 to 2079 (HFQS…SSRH), and 2100 to 2109 (LRSNSQSSIP). Phosphoserine is present on Ser-2104. A Filaggrin 12 repeat occupies 2218 to 2259 (DDSQYILFQKHLESPSFGNQSGFSPNERQLYTCNESIDSYHL).

The protein belongs to the S100-fused protein family. This sequence in the N-terminal section; belongs to the S-100 family. Post-translationally, deiminated by PADI1, PADI2 or PADI3 in vitro. The deiminated form is degraded by calpain-1/CAPN1 more quickly and into shorter peptides than the intact protein. In terms of processing, may be processed by calpain-1/CAPN1.

The protein localises to the cytoplasm. Its subcellular location is the cytoplasmic granule. Functionally, essential for normal cell-cell adhesion in the cornified cell layers. Important for proper integrity and mechanical strength of the stratum corneum of the epidermis. This is Filaggrin-2 (Flg2) from Mus musculus (Mouse).